The following is a 244-amino-acid chain: Small ribosomal subunit protein uS2 (244 aa).

A disordered region spans residues 224 to 244 (GQQGSDEAEEAEEAAEEVVAE). A compositionally biased stretch (acidic residues) spans 229-244 (DEAEEAEEAAEEVVAE).

Belongs to the universal ribosomal protein uS2 family.

This Desulfitobacterium hafniense (strain DSM 10664 / DCB-2) protein is Small ribosomal subunit protein uS2.